The chain runs to 227 residues: uncharacterized protein (227 aa).

The RCK N-terminal domain maps to 3-119 (RADFCIIGLG…STMGIREALI (117 aa)). The RCK C-terminal domain occupies 134–221 (HGLENEIINL…LNKYLNYINP (88 aa)).

This is an uncharacterized protein from Mycoplasma genitalium (strain ATCC 33530 / DSM 19775 / NCTC 10195 / G37) (Mycoplasmoides genitalium).